Reading from the N-terminus, the 422-residue chain is Serine--tRNA ligase (422 aa).

Residue 229-231 (TAE) participates in L-serine binding. 260 to 262 (RKE) provides a ligand contact to ATP. Glu283 contacts L-serine. Residue 347 to 350 (EISS) coordinates ATP. Residue Ser383 coordinates L-serine.

This sequence belongs to the class-II aminoacyl-tRNA synthetase family. Type-1 seryl-tRNA synthetase subfamily. As to quaternary structure, homodimer. The tRNA molecule binds across the dimer.

It is found in the cytoplasm. It catalyses the reaction tRNA(Ser) + L-serine + ATP = L-seryl-tRNA(Ser) + AMP + diphosphate + H(+). The enzyme catalyses tRNA(Sec) + L-serine + ATP = L-seryl-tRNA(Sec) + AMP + diphosphate + H(+). It functions in the pathway aminoacyl-tRNA biosynthesis; selenocysteinyl-tRNA(Sec) biosynthesis; L-seryl-tRNA(Sec) from L-serine and tRNA(Sec): step 1/1. Functionally, catalyzes the attachment of serine to tRNA(Ser). Is also able to aminoacylate tRNA(Sec) with serine, to form the misacylated tRNA L-seryl-tRNA(Sec), which will be further converted into selenocysteinyl-tRNA(Sec). In Geobacter sulfurreducens (strain ATCC 51573 / DSM 12127 / PCA), this protein is Serine--tRNA ligase.